Here is a 636-residue protein sequence, read N- to C-terminus: 1-deoxy-D-xylulose-5-phosphate synthase (636 aa).

Residues histidine 84 and 125-127 (GHS) contribute to the thiamine diphosphate site. A Mg(2+)-binding site is contributed by aspartate 156. Thiamine diphosphate contacts are provided by residues 157–158 (GA), asparagine 185, phenylalanine 292, and glutamate 375. Asparagine 185 is a Mg(2+) binding site.

Belongs to the transketolase family. DXPS subfamily. Homodimer. The cofactor is Mg(2+). Thiamine diphosphate serves as cofactor.

The enzyme catalyses D-glyceraldehyde 3-phosphate + pyruvate + H(+) = 1-deoxy-D-xylulose 5-phosphate + CO2. It functions in the pathway metabolic intermediate biosynthesis; 1-deoxy-D-xylulose 5-phosphate biosynthesis; 1-deoxy-D-xylulose 5-phosphate from D-glyceraldehyde 3-phosphate and pyruvate: step 1/1. Its function is as follows. Catalyzes the acyloin condensation reaction between C atoms 2 and 3 of pyruvate and glyceraldehyde 3-phosphate to yield 1-deoxy-D-xylulose-5-phosphate (DXP). The chain is 1-deoxy-D-xylulose-5-phosphate synthase from Cellvibrio japonicus (strain Ueda107) (Pseudomonas fluorescens subsp. cellulosa).